Here is a 201-residue protein sequence, read N- to C-terminus: Holliday junction branch migration complex subunit RuvA (201 aa).

The tract at residues 1–64 is domain I; that stretch reads MIGRLYGKII…EDAHLLFGFA (64 aa). The segment at 65 to 143 is domain II; the sequence is QKQDRTLFRE…GIAQTDFFVE (79 aa). Positions 144 to 154 are flexible linker; the sequence is HSHETMVATYE. A domain III region spans residues 154–201; the sequence is EIDASEEARDALLALGYKLTDAEKMIKKVHKSGATSEQLIRDALKASL.

The protein belongs to the RuvA family. Homotetramer. Forms an RuvA(8)-RuvB(12)-Holliday junction (HJ) complex. HJ DNA is sandwiched between 2 RuvA tetramers; dsDNA enters through RuvA and exits via RuvB. An RuvB hexamer assembles on each DNA strand where it exits the tetramer. Each RuvB hexamer is contacted by two RuvA subunits (via domain III) on 2 adjacent RuvB subunits; this complex drives branch migration. In the full resolvosome a probable DNA-RuvA(4)-RuvB(12)-RuvC(2) complex forms which resolves the HJ.

Its subcellular location is the cytoplasm. Functionally, the RuvA-RuvB-RuvC complex processes Holliday junction (HJ) DNA during genetic recombination and DNA repair, while the RuvA-RuvB complex plays an important role in the rescue of blocked DNA replication forks via replication fork reversal (RFR). RuvA specifically binds to HJ cruciform DNA, conferring on it an open structure. The RuvB hexamer acts as an ATP-dependent pump, pulling dsDNA into and through the RuvAB complex. HJ branch migration allows RuvC to scan DNA until it finds its consensus sequence, where it cleaves and resolves the cruciform DNA. This chain is Holliday junction branch migration complex subunit RuvA, found in Haemophilus ducreyi (strain 35000HP / ATCC 700724).